The chain runs to 110 residues: uncharacterized protein (110 aa).

This is an uncharacterized protein from Methanocaldococcus jannaschii (strain ATCC 43067 / DSM 2661 / JAL-1 / JCM 10045 / NBRC 100440) (Methanococcus jannaschii).